Consider the following 34-residue polypeptide: Photosystem II reaction center protein M (34 aa).

Residues 5–25 (ILAFIATALFVLIPTAFLIIL) form a helical membrane-spanning segment.

It belongs to the PsbM family. PSII is composed of 1 copy each of membrane proteins PsbA, PsbB, PsbC, PsbD, PsbE, PsbF, PsbH, PsbI, PsbJ, PsbK, PsbL, PsbM, PsbT, PsbX, PsbY, PsbZ, Psb30/Ycf12, at least 3 peripheral proteins of the oxygen-evolving complex and a large number of cofactors. It forms dimeric complexes.

It is found in the plastid. Its subcellular location is the chloroplast thylakoid membrane. One of the components of the core complex of photosystem II (PSII). PSII is a light-driven water:plastoquinone oxidoreductase that uses light energy to abstract electrons from H(2)O, generating O(2) and a proton gradient subsequently used for ATP formation. It consists of a core antenna complex that captures photons, and an electron transfer chain that converts photonic excitation into a charge separation. This subunit is found at the monomer-monomer interface. The protein is Photosystem II reaction center protein M of Zygnema circumcarinatum (Green alga).